Here is a 64-residue protein sequence, read N- to C-terminus: UPF0434 protein MADE_1009415 (64 aa).

It belongs to the UPF0434 family.

In Alteromonas mediterranea (strain DSM 17117 / CIP 110805 / LMG 28347 / Deep ecotype), this protein is UPF0434 protein MADE_1009415.